The chain runs to 382 residues: SAT4 family membrane protein (382 aa).

Residues 1-22 (MFGAELVGRETGGQSTDQPYSY) form a disordered region. A glycan (N-linked (GlcNAc...) asparagine) is linked at asparagine 78. 2 helical membrane passes run 80–100 (SQIL…LLYL) and 112–132 (YLSI…NFFL). An N-linked (GlcNAc...) asparagine glycan is attached at asparagine 147. The next 3 helical transmembrane spans lie at 159–179 (ILVT…LPII), 192–212 (LGIS…IMRL), and 228–248 (WYTE…PTFF). Asparagine 269 carries an N-linked (GlcNAc...) asparagine glycan.

Belongs to the SAT4 family.

It is found in the membrane. The chain is SAT4 family membrane protein from Emericella nidulans (strain FGSC A4 / ATCC 38163 / CBS 112.46 / NRRL 194 / M139) (Aspergillus nidulans).